A 120-amino-acid polypeptide reads, in one-letter code: Large ribosomal subunit protein uL18 (120 aa).

It belongs to the universal ribosomal protein uL18 family. As to quaternary structure, part of the 50S ribosomal subunit; part of the 5S rRNA/L5/L18/L25 subcomplex. Contacts the 5S and 23S rRNAs.

Its function is as follows. This is one of the proteins that bind and probably mediate the attachment of the 5S RNA into the large ribosomal subunit, where it forms part of the central protuberance. The polypeptide is Large ribosomal subunit protein uL18 (Rhizobium johnstonii (strain DSM 114642 / LMG 32736 / 3841) (Rhizobium leguminosarum bv. viciae)).